We begin with the raw amino-acid sequence, 306 residues long: UDP-3-O-acyl-N-acetylglucosamine deacetylase (306 aa).

Residues His79, His238, and Asp242 each coordinate Zn(2+). His265 acts as the Proton donor in catalysis.

It belongs to the LpxC family. Requires Zn(2+) as cofactor.

It carries out the reaction a UDP-3-O-[(3R)-3-hydroxyacyl]-N-acetyl-alpha-D-glucosamine + H2O = a UDP-3-O-[(3R)-3-hydroxyacyl]-alpha-D-glucosamine + acetate. Its pathway is glycolipid biosynthesis; lipid IV(A) biosynthesis; lipid IV(A) from (3R)-3-hydroxytetradecanoyl-[acyl-carrier-protein] and UDP-N-acetyl-alpha-D-glucosamine: step 2/6. Its function is as follows. Catalyzes the hydrolysis of UDP-3-O-myristoyl-N-acetylglucosamine to form UDP-3-O-myristoylglucosamine and acetate, the committed step in lipid A biosynthesis. The protein is UDP-3-O-acyl-N-acetylglucosamine deacetylase of Shewanella violacea (strain JCM 10179 / CIP 106290 / LMG 19151 / DSS12).